The primary structure comprises 316 residues: Acetyl-coenzyme A carboxylase carboxyl transferase subunit beta, chloroplastic (316 aa).

The CoA carboxyltransferase N-terminal domain maps to L47 to K316. The Zn(2+) site is built by C51, C54, C70, and C73. The C4-type zinc finger occupies C51–C73.

This sequence belongs to the AccD/PCCB family. As to quaternary structure, acetyl-CoA carboxylase is a heterohexamer composed of biotin carboxyl carrier protein, biotin carboxylase and 2 subunits each of ACCase subunit alpha and ACCase plastid-coded subunit beta (accD). The cofactor is Zn(2+).

The protein resides in the plastid. Its subcellular location is the chloroplast stroma. The enzyme catalyses N(6)-carboxybiotinyl-L-lysyl-[protein] + acetyl-CoA = N(6)-biotinyl-L-lysyl-[protein] + malonyl-CoA. The protein operates within lipid metabolism; malonyl-CoA biosynthesis; malonyl-CoA from acetyl-CoA: step 1/1. Functionally, component of the acetyl coenzyme A carboxylase (ACC) complex. Biotin carboxylase (BC) catalyzes the carboxylation of biotin on its carrier protein (BCCP) and then the CO(2) group is transferred by the transcarboxylase to acetyl-CoA to form malonyl-CoA. The chain is Acetyl-coenzyme A carboxylase carboxyl transferase subunit beta, chloroplastic from Marchantia polymorpha (Common liverwort).